The sequence spans 78 residues: TP53-regulated inhibitor of apoptosis 1-A (78 aa).

A coiled-coil region spans residues Met1–Ile52. The CHCH domain occupies Gly5–Lys55. 2 consecutive short sequence motifs (cx9C motif) follow at residues Cys8–Cys18 and Cys37–Cys47. Cystine bridges form between Cys8/Cys47 and Cys18/Cys37.

It belongs to the TRIAP1/MDM35 family. In terms of assembly, monomer. Forms a complex with prelid1 in the mitochondrion intermembrane space. Interacts with prelid3a.

It localises to the mitochondrion. The protein localises to the mitochondrion intermembrane space. It catalyses the reaction a 1,2-diacyl-sn-glycero-3-phosphate(in) = a 1,2-diacyl-sn-glycero-3-phosphate(out). Functionally, involved in the modulation of the mitochondrial apoptotic pathway by ensuring the accumulation of cardiolipin (CL) in mitochondrial membranes. The triap1:prelid1 complex probably functions as a phosphatidic acid (PA) transporter across the mitochondrion intermembrane space to provide PA for cardiolipin CL synthesis in the inner membrane. Likewise, the triap1:prelid3a complex mediates the transfer of phosphatidic acid (PA) between liposomes (in vitro) and probably functions as a PA transporter across the mitochondrion intermembrane space (in vivo). Mediates cell survival by inhibiting activation of caspase-9 which prevents induction of apoptosis. Required for pronephros development; probably involved at an early stage in the formation of pronephric components derived from the somatic layer. The polypeptide is TP53-regulated inhibitor of apoptosis 1-A (triap1-a) (Xenopus laevis (African clawed frog)).